The primary structure comprises 165 residues: Probable DNA polymerase III subunit chi (165 aa).

Belongs to the DNA polymerase III chi/HolC chain family. In terms of assembly, DNA polymerase III contains a core (composed of alpha, epsilon and theta chains) that associates with a tau subunit. This core dimerizes to form the POLIII' complex. PolIII' associates with the gamma complex (composed of gamma, delta, delta', psi and chi chains) and with the beta chain to form the complete DNA polymerase III complex. Interacts directly with the psi subunit (holD). The only subunit of the DNA polymerase III holoenzyme known to interact with single-stranded DNA binding protein (SSB).

The enzyme catalyses DNA(n) + a 2'-deoxyribonucleoside 5'-triphosphate = DNA(n+1) + diphosphate. Functionally, part of the beta sliding clamp loading complex, which hydrolyzes ATP to load the beta clamp onto primed DNA to form the DNA replication pre-initiation complex. DNA polymerase III is a complex, multichain enzyme responsible for most of the replicative synthesis in bacteria. This DNA polymerase also exhibits 3' to 5' exonuclease activity. This Rickettsia prowazekii (strain Madrid E) protein is Probable DNA polymerase III subunit chi.